Consider the following 58-residue polypeptide: Small ribosomal subunit protein eS31 (58 aa).

4 residues coordinate Zn(2+): cysteine 29, cysteine 32, cysteine 48, and cysteine 51. The segment at 29-51 adopts a C4-type zinc-finger fold; sequence CPRCGSFMAHHLKPVPRWHCGKC.

Belongs to the eukaryotic ribosomal protein eS31 family. As to quaternary structure, part of the 30S ribosomal subunit. The cofactor is Zn(2+).

In Ignicoccus hospitalis (strain KIN4/I / DSM 18386 / JCM 14125), this protein is Small ribosomal subunit protein eS31.